Here is a 610-residue protein sequence, read N- to C-terminus: UvrABC system protein C (610 aa).

In terms of domain architecture, GIY-YIG spans 12–91 (TSPGVYLYKN…IKQKKPRFNI (80 aa)). The region spanning 202–237 (SDLKQSLTARMNKAAEGMQFELAAKYRDLITTVEDL) is the UVR domain.

It belongs to the UvrC family. As to quaternary structure, interacts with UvrB in an incision complex.

The protein localises to the cytoplasm. The UvrABC repair system catalyzes the recognition and processing of DNA lesions. UvrC both incises the 5' and 3' sides of the lesion. The N-terminal half is responsible for the 3' incision and the C-terminal half is responsible for the 5' incision. The protein is UvrABC system protein C of Koribacter versatilis (strain Ellin345).